A 371-amino-acid chain; its full sequence is Histidinol-phosphate aminotransferase (371 aa).

An N6-(pyridoxal phosphate)lysine modification is found at K228.

The protein belongs to the class-II pyridoxal-phosphate-dependent aminotransferase family. Histidinol-phosphate aminotransferase subfamily. In terms of assembly, homodimer. Pyridoxal 5'-phosphate serves as cofactor.

The enzyme catalyses L-histidinol phosphate + 2-oxoglutarate = 3-(imidazol-4-yl)-2-oxopropyl phosphate + L-glutamate. Its pathway is amino-acid biosynthesis; L-histidine biosynthesis; L-histidine from 5-phospho-alpha-D-ribose 1-diphosphate: step 7/9. The chain is Histidinol-phosphate aminotransferase from Thermosynechococcus vestitus (strain NIES-2133 / IAM M-273 / BP-1).